A 319-amino-acid polypeptide reads, in one-letter code: L-lactate dehydrogenase (319 aa).

NAD(+)-binding positions include valine 11, aspartate 32, arginine 37, tyrosine 62, and 76-77; that span reads GV. Substrate is bound by residues glutamine 79, arginine 85, and 117-120; that span reads NPVD. NAD(+) is bound by residues 115–117 and serine 140; that span reads VTN. 145–148 provides a ligand contact to substrate; sequence DTAR. Residues arginine 150 and histidine 165 each contribute to the beta-D-fructose 1,6-bisphosphate site. Histidine 172 functions as the Proton acceptor in the catalytic mechanism. Residue tyrosine 217 is modified to Phosphotyrosine. Threonine 226 contributes to the substrate binding site.

The protein belongs to the LDH/MDH superfamily. LDH family. Homotetramer.

The protein localises to the cytoplasm. The enzyme catalyses (S)-lactate + NAD(+) = pyruvate + NADH + H(+). It functions in the pathway fermentation; pyruvate fermentation to lactate; (S)-lactate from pyruvate: step 1/1. Its activity is regulated as follows. Allosterically activated by fructose 1,6-bisphosphate (FBP). Catalyzes the conversion of lactate to pyruvate. The chain is L-lactate dehydrogenase from Thermotoga sp. (strain RQ2).